The following is a 425-amino-acid chain: Dihydroorotase (425 aa).

2 residues coordinate Zn(2+): histidine 60 and histidine 62. Substrate contacts are provided by residues histidine 62 to arginine 64 and asparagine 94. Zn(2+) contacts are provided by aspartate 152, histidine 179, and histidine 232. Asparagine 278 is a substrate binding site. Position 305 (aspartate 305) interacts with Zn(2+). Aspartate 305 is an active-site residue. A substrate-binding site is contributed by histidine 309.

The protein belongs to the metallo-dependent hydrolases superfamily. DHOase family. Class I DHOase subfamily. It depends on Zn(2+) as a cofactor.

The catalysed reaction is (S)-dihydroorotate + H2O = N-carbamoyl-L-aspartate + H(+). It functions in the pathway pyrimidine metabolism; UMP biosynthesis via de novo pathway; (S)-dihydroorotate from bicarbonate: step 3/3. Functionally, catalyzes the reversible cyclization of carbamoyl aspartate to dihydroorotate. The polypeptide is Dihydroorotase (Syntrophotalea carbinolica (strain DSM 2380 / NBRC 103641 / GraBd1) (Pelobacter carbinolicus)).